We begin with the raw amino-acid sequence, 341 residues long: Glycerol-3-phosphate dehydrogenase [NAD(P)+] (341 aa).

NADPH contacts are provided by S14, F15, R35, and K108. Residues K108 and G136 each contribute to the sn-glycerol 3-phosphate site. A140 contacts NADPH. K191, D244, S254, R255, and N256 together coordinate sn-glycerol 3-phosphate. The active-site Proton acceptor is the K191. Residue R255 coordinates NADPH. NADPH contacts are provided by V279 and E281.

It belongs to the NAD-dependent glycerol-3-phosphate dehydrogenase family.

The protein localises to the cytoplasm. It carries out the reaction sn-glycerol 3-phosphate + NAD(+) = dihydroxyacetone phosphate + NADH + H(+). The catalysed reaction is sn-glycerol 3-phosphate + NADP(+) = dihydroxyacetone phosphate + NADPH + H(+). Its pathway is membrane lipid metabolism; glycerophospholipid metabolism. Its function is as follows. Catalyzes the reduction of the glycolytic intermediate dihydroxyacetone phosphate (DHAP) to sn-glycerol 3-phosphate (G3P), the key precursor for phospholipid synthesis. This is Glycerol-3-phosphate dehydrogenase [NAD(P)+] from Pseudomonas putida (strain ATCC 700007 / DSM 6899 / JCM 31910 / BCRC 17059 / LMG 24140 / F1).